Consider the following 181-residue polypeptide: Sporozoite-associated mosquito saliva protein 1 (181 aa).

The first 24 residues, 1–24 (MNSSWRVVVFLGLVILCHSRRARA), serve as a signal peptide directing secretion.

Salivary gland (at protein level). In terms of tissue distribution, (Microbial infection) Detected with Plasmodium berghei sporozoites isolated from the saliva of infected Anopheles gambiae mosquitoes (at protein level).

The protein localises to the secreted. Its function is as follows. Decreases host neutrophil chemotaxis induced by N-formylmethionine-leucyl-phenylalanine (fMLP). In terms of biological role, (Microbial infection) Interacts with the surface of Plasmodium berghei sporozoites. Enhances sporozoite gliding activity. Enhances host hepatocyte traversal by sporozoites. This Anopheles gambiae (African malaria mosquito) protein is Sporozoite-associated mosquito saliva protein 1.